Here is a 1210-residue protein sequence, read N- to C-terminus: DNA-directed RNA polymerase II subunit RPB2 (1210 aa).

Asp826 is a Mg(2+) binding site. Residues Cys1152, Cys1155, Cys1170, and Cys1173 each contribute to the Zn(2+) site. The C4-type zinc-finger motif lies at 1152-1173 (CDICGLIAIASYKKDSYECRSC).

This sequence belongs to the RNA polymerase beta chain family. In terms of assembly, component of the RNA polymerase II (Pol II) complex consisting of 12 subunits.

It is found in the nucleus. The catalysed reaction is RNA(n) + a ribonucleoside 5'-triphosphate = RNA(n+1) + diphosphate. Functionally, DNA-dependent RNA polymerase catalyzes the transcription of DNA into RNA using the four ribonucleoside triphosphates as substrates. Second largest component of RNA polymerase II which synthesizes mRNA precursors and many functional non-coding RNAs. Proposed to contribute to the polymerase catalytic activity and forms the polymerase active center together with the largest subunit. Pol II is the central component of the basal RNA polymerase II transcription machinery. It is composed of mobile elements that move relative to each other. RPB2 is part of the core element with the central large cleft, the clamp element that moves to open and close the cleft and the jaws that are thought to grab the incoming DNA template. The polypeptide is DNA-directed RNA polymerase II subunit RPB2 (rpb2) (Schizosaccharomyces pombe (strain 972 / ATCC 24843) (Fission yeast)).